The following is a 194-amino-acid chain: SRP-independent targeting protein 3 homolog (194 aa).

2 helical membrane passes run 43-63 and 110-130; these read ILYATVNIVQIGIFLYTKIII and LVTIATTLFMHLYMGYAPPLL.

Belongs to the PHO88 family.

The protein resides in the endoplasmic reticulum membrane. Functionally, may function in a SRP (signal recognition particle) and GET (guided entry of tail-anchored proteins) independent pathway for targeting a broad range of substrate proteins to the endoplasmic reticulum. Involved in inorganic phosphate uptake. Also involved in telomere length regulation and maintenance. This chain is SRP-independent targeting protein 3 homolog, found in Schizosaccharomyces pombe (strain 972 / ATCC 24843) (Fission yeast).